Consider the following 227-residue polypeptide: Venom allergen 5 (227 aa).

Residues 1–23 form the signal peptide; the sequence is MEISGLVYLIIIVTIIDLPYGKA. Intrachain disulfides connect cysteine 27-cysteine 40, cysteine 31-cysteine 124, cysteine 49-cysteine 117, and cysteine 193-cysteine 210. Residues 68-212 enclose the SCP domain; it reads LKEHNDFRQK…WHYHYLVCNY (145 aa).

It belongs to the CRISP family. Venom allergen 5-like subfamily. Expressed by the venom gland.

Its subcellular location is the secreted. The sequence is that of Venom allergen 5 from Vespula maculifrons (Eastern yellow jacket).